A 406-amino-acid chain; its full sequence is Peptidase T (406 aa).

Zn(2+) is bound at residue His-77. Asp-79 is a catalytic residue. Residue Asp-139 participates in Zn(2+) binding. Glu-173 serves as the catalytic Proton acceptor. Residues Glu-174, Asp-196, and His-377 each contribute to the Zn(2+) site.

The protein belongs to the peptidase M20B family. The cofactor is Zn(2+).

The protein localises to the cytoplasm. The catalysed reaction is Release of the N-terminal residue from a tripeptide.. Functionally, cleaves the N-terminal amino acid of tripeptides. The polypeptide is Peptidase T (Parabacteroides distasonis (strain ATCC 8503 / DSM 20701 / CIP 104284 / JCM 5825 / NCTC 11152)).